A 460-amino-acid chain; its full sequence is Kynureninase (460 aa).

Residues Leu-127, Thr-128, 165 to 168, Asp-249, His-252, and Tyr-274 contribute to the pyridoxal 5'-phosphate site; that span reads FPSD. Lys-275 carries the N6-(pyridoxal phosphate)lysine modification. 2 residues coordinate pyridoxal 5'-phosphate: Trp-304 and Asn-332.

It belongs to the kynureninase family. In terms of assembly, homodimer. Pyridoxal 5'-phosphate is required as a cofactor.

It is found in the cytoplasm. The enzyme catalyses L-kynurenine + H2O = anthranilate + L-alanine + H(+). The catalysed reaction is 3-hydroxy-L-kynurenine + H2O = 3-hydroxyanthranilate + L-alanine + H(+). It participates in amino-acid degradation; L-kynurenine degradation; L-alanine and anthranilate from L-kynurenine: step 1/1. The protein operates within cofactor biosynthesis; NAD(+) biosynthesis; quinolinate from L-kynurenine: step 2/3. Catalyzes the cleavage of L-kynurenine (L-Kyn) and L-3-hydroxykynurenine (L-3OHKyn) into anthranilic acid (AA) and 3-hydroxyanthranilic acid (3-OHAA), respectively. The protein is Kynureninase of Monosiga brevicollis (Choanoflagellate).